Here is a 518-residue protein sequence, read N- to C-terminus: Cytokinin hydroxylase (518 aa).

The helical transmembrane segment at 1 to 21 (MLLTILKSLLVIFVTTILRVL) threads the bilayer. C464 is a binding site for heme.

This sequence belongs to the cytochrome P450 family. Requires heme as cofactor. In terms of tissue distribution, expressed in roots and flowers.

It is found in the membrane. It catalyses the reaction N(6)-(dimethylallyl)adenosine 5'-phosphate + NADPH + O2 + H(+) = 9-ribosyl-trans-zeatin 5'-phosphate + NADP(+) + H2O. The enzyme catalyses N(6)-(dimethylallyl)adenosine 5'-diphosphate + NADPH + O2 + H(+) = 9-ribosyl-trans-zeatin 5'-diphosphate + NADP(+) + H2O. The catalysed reaction is N(6)-(dimethylallyl)adenosine 5'-triphosphate + NADPH + O2 + H(+) = 9-ribosyl-trans-zeatin 5'-triphosphate + NADP(+) + H2O. Its function is as follows. Cytokinin hydroxylase that catalyzes the biosynthesis of trans-zeatin via the isopentenyladenine riboside 5'-monophosphate (iPRMP)-dependent pathway. Can use isopentenyladenosine-5'-monophosphate, isopentenyladenosine-5'-diphosphate and isopentenyladenosine-5'-triphosphate as substrate. The protein is Cytokinin hydroxylase (CYP735A1) of Arabidopsis thaliana (Mouse-ear cress).